A 135-amino-acid chain; its full sequence is D-ribose pyranase (135 aa).

H20 (proton donor) is an active-site residue. Substrate is bound by residues D28, H102, and 124-126 (YAN).

It belongs to the RbsD / FucU family. RbsD subfamily. Homodecamer.

Its subcellular location is the cytoplasm. The catalysed reaction is beta-D-ribopyranose = beta-D-ribofuranose. Its pathway is carbohydrate metabolism; D-ribose degradation; D-ribose 5-phosphate from beta-D-ribopyranose: step 1/2. Catalyzes the interconversion of beta-pyran and beta-furan forms of D-ribose. This Rhodopirellula baltica (strain DSM 10527 / NCIMB 13988 / SH1) protein is D-ribose pyranase.